The chain runs to 586 residues: Thioredoxin domain-containing protein 3 (586 aa).

The Thioredoxin domain occupies 10-116 (LQSVVNSQNL…NRKVITLIDE (107 aa)). Residues C39 and C42 are joined by a disulfide bond. NDK stretches follow at residues 157-254 (MAII…VLEE), 312-452 (VQTT…STLA), and 453-586 (LIKP…NPEN).

This sequence in the C-terminal section; belongs to the NDK family. In terms of assembly, monomer. In terms of tissue distribution, testis-specific. Expressed mainly in round spermatids.

The protein resides in the cytoplasm. In terms of biological role, probably required during the final stages of sperm tail maturation in the testis and/or epididymis, where extensive disulfide bonding of fibrous sheath (FS) proteins occurs. In vitro, it has neither nucleoside diphosphate kinase (NDPK) activity nor reducing activity on disulfide bonds. Exhibits a 3'-5' exonuclease activity with a preference for single-stranded DNA, suggesting roles in DNA proofreading and repair. This chain is Thioredoxin domain-containing protein 3 (Nme8), found in Mus musculus (Mouse).